Here is a 318-residue protein sequence, read N- to C-terminus: Bis(5'-nucleosyl)-tetraphosphatase, symmetrical (318 aa).

Positions 269–318 (PGREVTGPAPVARAPRRPRERLGRQRSRGNRGNAGNTAVPAKPPVDTPQD) are disordered. Residues 282–297 (APRRPRERLGRQRSRG) show a composition bias toward basic residues. Positions 309-318 (AKPPVDTPQD) are enriched in pro residues.

Belongs to the Ap4A hydrolase family.

It catalyses the reaction P(1),P(4)-bis(5'-adenosyl) tetraphosphate + H2O = 2 ADP + 2 H(+). Hydrolyzes diadenosine 5',5'''-P1,P4-tetraphosphate to yield ADP. In Xanthomonas oryzae pv. oryzae (strain MAFF 311018), this protein is Bis(5'-nucleosyl)-tetraphosphatase, symmetrical.